We begin with the raw amino-acid sequence, 134 residues long: Methylglyoxal synthase (134 aa).

Positions 1–134 constitute an MGS-like domain; that stretch reads MKIALIAHDR…DWRLIQERRN (134 aa). Substrate-binding positions include His8, Lys12, 34–37, and 54–55; these read TGTT and SG. Asp60 functions as the Proton donor/acceptor in the catalytic mechanism. Residue His87 participates in substrate binding.

This sequence belongs to the methylglyoxal synthase family.

It catalyses the reaction dihydroxyacetone phosphate = methylglyoxal + phosphate. In terms of biological role, catalyzes the formation of methylglyoxal from dihydroxyacetone phosphate. In Lysinibacillus sphaericus (strain C3-41), this protein is Methylglyoxal synthase.